The sequence spans 387 residues: Sialic acid-binding Ig-like lectin 13 (387 aa).

A signal peptide spans 1–15 (MLPLLLPLLWAGALA). In terms of domain architecture, Ig-like V-type spans 16–138 (LEGIFQLEVP…KDPPLSVHVT (123 aa)). The Extracellular segment spans residues 16 to 341 (LEGIFQLEVP…QRKSGPMAEV (326 aa)). 3 disulfide bridges follow: C35/C168, C40/C100, and C162/C211. Residue N99 is glycosylated (N-linked (GlcNAc...) asparagine). R118 serves as a coordination point for N-acetylneuraminate. The 84-residue stretch at 144–227 (PDILIPGALK…AGVTTTRTVR (84 aa)) folds into the Ig-like C2-type 1 domain. N-linked (GlcNAc...) asparagine glycosylation is found at N229, N236, and N254. In terms of domain architecture, Ig-like C2-type 2 spans 234-326 (PQNLTLTVFQ…RNPLGSQQVS (93 aa)). The cysteines at positions 270 and 314 are disulfide-linked. The chain crosses the membrane as a helical span at residues 342 to 362 (VLVAIGEAAVKILLLFLCLII). Over 363–387 (LRVKSHRRKAAKAATGVEAAKVVKG) the chain is Cytoplasmic.

The protein belongs to the immunoglobulin superfamily. SIGLEC (sialic acid binding Ig-like lectin) family.

It is found in the membrane. Putative adhesion molecule that mediates sialic-acid dependent binding to cells. This is Sialic acid-binding Ig-like lectin 13 (SIGLEC13) from Pan troglodytes (Chimpanzee).